The following is a 78-amino-acid chain: Large ribosomal subunit protein bL28 (78 aa).

The tract at residues 1 to 23 (MSRVCQVTGKKPMVGNNRSHAKN) is disordered.

It belongs to the bacterial ribosomal protein bL28 family.

The chain is Large ribosomal subunit protein bL28 from Shewanella sediminis (strain HAW-EB3).